Reading from the N-terminus, the 468-residue chain is Midnolin (468 aa).

Residues 31 to 105 enclose the Ubiquitin-like domain; that stretch reads MSLAIHSTTG…LTLVPTVEAG (75 aa). Disordered stretches follow at residues 182–264 and 404–447; these read PSIA…RSRK and LRRK…LGLD. Low complexity predominate over residues 185 to 201; that stretch reads ASPVSSPCRPVSSAARV. Pro residues predominate over residues 202 to 213; it reads PPVPTSPSPASP. Composition is skewed to low complexity over residues 237-260 and 419-431; these read SPTA…SPAP and SPSR…DSSS.

As to quaternary structure, interacts with GCK; the interaction occurs preferentially at low glucose levels. Interacts with the proteasome.

The protein resides in the nucleus. It is found in the nucleolus. Its subcellular location is the cytoplasm. The protein localises to the cytosol. Facilitates the ubiquitin-independent proteasomal degradation of stimulus-induced transcription factors such as FOSB, EGR1, NR4A1, and IRF4 to the proteasome for degradation. Promotes also the degradation of other substrates such as CBX4. Plays a role in inhibiting the activity of glucokinase GCK and both glucose-induced and basal insulin secretion. The chain is Midnolin (MIDN) from Homo sapiens (Human).